Consider the following 2559-residue polypeptide: Ubiquitin carboxyl-terminal hydrolase 9X (2559 aa).

Over residues 1–44 the composition is skewed to polar residues; the sequence is MTATTRGSPVGGNDNQGQAPDGQSQPPLQQNQTSSPDSSNENSP. The tract at residues 1-64 is disordered; that stretch reads MTATTRGSPV…DAPPQIEDEE (64 aa). Phosphoserine is present on residues serine 374, serine 375, and serine 588. The disordered stretch occupies residues 967 to 999; sequence QISSNMPSSPDSSSDSSTGSPGNHGNHYSDGPN. Residues 969–989 show a composition bias toward low complexity; that stretch reads SSNMPSSPDSSSDSSTGSPGN. The region spanning 1557 to 1956 is the USP domain; sequence VGLKNAGATC…NAYILFYERM (400 aa). Cysteine 1566 serves as the catalytic Nucleophile. The tract at residues 1592–1633 is disordered; that stretch reads GSDVDDDMSGDEKQDNESNVDPRDDVFGYPQQFEDKPPLSKT. The residue at position 1600 (serine 1600) is a Phosphoserine. Basic and acidic residues-rich tracts occupy residues 1601–1617 and 1624–1633; these read GDEK…RDDV and FEDKPPLSKT. Cysteine 1727, histidine 1729, cysteine 1771, and cysteine 1774 together coordinate Zn(2+). Histidine 1879 acts as the Proton acceptor in catalysis. Serine 2443 is subject to Phosphoserine. The segment covering 2475-2484 has biased composition (acidic residues); sequence PEEEPDDQDA. The disordered stretch occupies residues 2475 to 2559; it reads PEEEPDDQDA…QTKGSVKCTY (85 aa). Polar residues-rich tracts occupy residues 2503–2513 and 2527–2537; these read PGSQYQQNNHV and NNPQRTGQRAQ. Residue tyrosine 2540 is modified to Phosphotyrosine. The residue at position 2547 (serine 2547) is a Phosphoserine. Threonine 2551 is subject to Phosphothreonine.

This sequence belongs to the peptidase C19 family. As to quaternary structure, interacts with SMAD4, MARK4, NUAK1 and BIRC5/survivin. Interacts with DCX. Interacts with OTUD4 and USP7; the interaction is direct. As to expression, highest levels in liver and brain with expression also detected in heart, muscle, spleen and kidney (at protein leve). Ubiquitously expressed in adult tissues.

It is found in the cytoplasm. The protein resides in the cytosol. The protein localises to the cell projection. Its subcellular location is the growth cone. It localises to the cytoskeleton. It is found in the cilium axoneme. It carries out the reaction Thiol-dependent hydrolysis of ester, thioester, amide, peptide and isopeptide bonds formed by the C-terminal Gly of ubiquitin (a 76-residue protein attached to proteins as an intracellular targeting signal).. In terms of biological role, deubiquitinase involved both in the processing of ubiquitin precursors and of ubiquitinated proteins. May therefore play an important regulatory role at the level of protein turnover by preventing degradation of proteins through the removal of conjugated ubiquitin. Specifically hydrolyzes 'Lys-11'-, followed by 'Lys-63'-, 'Lys-48'- and 'Lys-6'-linked polyubiquitins chains. Essential component of TGF-beta/BMP signaling cascade. Specifically deubiquitinates monoubiquitinated SMAD4, opposing the activity of E3 ubiquitin-protein ligase TRIM33. Deubiquitinates alkylation repair enzyme ALKBH3. OTUD4 recruits USP7 and USP9X to stabilize ALKBH3, thereby promoting the repair of alkylated DNA lesions. Deubiquitinates RNA demethylase enzyme ALKBH5, promoting its stability. Deubiquitinates mTORC2 complex component RICTOR at 'Lys-294' by removing 'Lys-63'-linked polyubiquitin chains, stabilizing RICTOR and enhancing its binding to MTOR, thus promoting mTORC2 complex assembly. Regulates chromosome alignment and segregation in mitosis by regulating the localization of BIRC5/survivin to mitotic centromeres. Involved in axonal growth and neuronal cell migration. Regulates cellular clock function by enhancing the protein stability and transcriptional activity of the core circadian protein BMAL1 via its deubiquitinating activity. Acts as a regulator of peroxisome import by mediating deubiquitination of PEX5: specifically deubiquitinates PEX5 monoubiquitinated at 'Cys-11' following its retrotranslocation into the cytosol, resetting PEX5 for a subsequent import cycle. Deubiquitinates PEG10. Inhibits the activation of the Hippo signaling pathway via deubiquitination of AMOTL2 at 'Lys-337' and 'Lys-404' which prohibits its interaction with and activation of LATS2. Loss of LATS2 activation and subsequent loss of YAP1 phosphorylation results in an increase in YAP1-driven transcription of target genes. The protein is Ubiquitin carboxyl-terminal hydrolase 9X of Mus musculus (Mouse).